The chain runs to 181 residues: Nedd8-conjugating enzyme UbcE2M (181 aa).

Interaction with Uba3 stretches follow at residues 4–7 (LFTL) and 24–54 (ASAA…PNDL). Positions 26 to 170 (AAQLRIQKDI…VKKAMRGGCV (145 aa)) constitute a UBC core domain. Cysteine 108 acts as the Glycyl thioester intermediate in catalysis.

It belongs to the ubiquitin-conjugating enzyme family. UBC12 subfamily. In terms of assembly, interacts with Uba3. Expressed in the wing disk.

The catalysed reaction is [E1 NEDD8-activating enzyme]-S-[NEDD8 protein]-yl-L-cysteine + [E2 NEDD8-conjugating enzyme]-L-cysteine = [E1 NEDD8-activating enzyme]-L-cysteine + [E2 NEDD8-conjugating enzyme]-S-[NEDD8-protein]-yl-L-cysteine.. It participates in protein modification; protein neddylation. In terms of biological role, accepts the ubiquitin-like protein Nedd8 from the Uba3-APP-BP1 E1 complex and catalyzes its covalent attachment to other proteins. Required for Cul1 and Cul3 neddylation. Negatively regulates full-length ci stability and hedgehog signaling. The chain is Nedd8-conjugating enzyme UbcE2M from Drosophila melanogaster (Fruit fly).